Here is a 527-residue protein sequence, read N- to C-terminus: GMP synthase [glutamine-hydrolyzing] (527 aa).

The Glutamine amidotransferase type-1 domain occupies 11–209 (RILILDFGSQ…VLNICGCENL (199 aa)). Cys88 acts as the Nucleophile in catalysis. Catalysis depends on residues His183 and Glu185. In terms of domain architecture, GMPS ATP-PPase spans 210-402 (WTSANIIEDA…LGLPYNMLYR (193 aa)). 237–243 (SGGVDSS) is a binding site for ATP.

Homodimer.

The enzyme catalyses XMP + L-glutamine + ATP + H2O = GMP + L-glutamate + AMP + diphosphate + 2 H(+). The protein operates within purine metabolism; GMP biosynthesis; GMP from XMP (L-Gln route): step 1/1. In terms of biological role, catalyzes the synthesis of GMP from XMP. The polypeptide is GMP synthase [glutamine-hydrolyzing] (Photobacterium profundum (strain SS9)).